Here is a 379-residue protein sequence, read N- to C-terminus: Chaperone protein DnaJ (379 aa).

The 66-residue stretch at 5–70 (DYYEVLGVSR…QKRAAYDQYG (66 aa)) folds into the J domain. The segment at 134 to 212 (GVTKEIRIPT…CHGHGRVEKS (79 aa)) adopts a CR-type zinc-finger fold. Residues Cys-147, Cys-150, Cys-164, Cys-167, Cys-186, Cys-189, Cys-200, and Cys-203 each coordinate Zn(2+). 4 CXXCXGXG motif repeats span residues 147 to 154 (CDVCHGSG), 164 to 171 (CPTCHGAG), 186 to 193 (CPHCHGRG), and 200 to 207 (CNKCHGHG).

It belongs to the DnaJ family. Homodimer. The cofactor is Zn(2+).

The protein localises to the cytoplasm. Functionally, participates actively in the response to hyperosmotic and heat shock by preventing the aggregation of stress-denatured proteins and by disaggregating proteins, also in an autonomous, DnaK-independent fashion. Unfolded proteins bind initially to DnaJ; upon interaction with the DnaJ-bound protein, DnaK hydrolyzes its bound ATP, resulting in the formation of a stable complex. GrpE releases ADP from DnaK; ATP binding to DnaK triggers the release of the substrate protein, thus completing the reaction cycle. Several rounds of ATP-dependent interactions between DnaJ, DnaK and GrpE are required for fully efficient folding. Also involved, together with DnaK and GrpE, in the DNA replication of plasmids through activation of initiation proteins. The protein is Chaperone protein DnaJ of Yersinia pseudotuberculosis serotype O:1b (strain IP 31758).